The primary structure comprises 228 residues: Ureidoacrylate amidohydrolase RutB (228 aa).

D23 serves as the catalytic Proton acceptor. K132 is an active-site residue. The active-site Nucleophile is C165.

It belongs to the isochorismatase family. RutB subfamily.

The catalysed reaction is (Z)-3-ureidoacrylate + H2O + H(+) = (Z)-3-aminoacrylate + NH4(+) + CO2. It catalyses the reaction (Z)-3-ureidoacrylate + H2O = (Z)-3-aminoacrylate + carbamate + H(+). The enzyme catalyses (Z)-2-methylureidoacrylate + H2O + H(+) = (Z)-2-methylaminoacrylate + NH4(+) + CO2. Functionally, hydrolyzes ureidoacrylate to form aminoacrylate and carbamate. The carbamate hydrolyzes spontaneously, thereby releasing one of the nitrogen atoms of the pyrimidine ring as ammonia and one of its carbon atoms as CO2. The sequence is that of Ureidoacrylate amidohydrolase RutB from Agrobacterium fabrum (strain C58 / ATCC 33970) (Agrobacterium tumefaciens (strain C58)).